A 233-amino-acid chain; its full sequence is Probable septum site-determining protein MinC (233 aa).

The tract at residues leucine 98 to glutamine 123 is disordered. The segment covering arginine 107–valine 120 has biased composition (pro residues).

The protein belongs to the MinC family. Interacts with MinD and FtsZ.

Cell division inhibitor that blocks the formation of polar Z ring septums. Rapidly oscillates between the poles of the cell to destabilize FtsZ filaments that have formed before they mature into polar Z rings. Prevents FtsZ polymerization. In Klebsiella pneumoniae (strain 342), this protein is Probable septum site-determining protein MinC.